We begin with the raw amino-acid sequence, 332 residues long: MRVVLFSSQSYDRGPFEEANKTFNHEIIYHNFSLNKDTVSLAGKAQVVCVFVNDQVDADTLKALAENGVKLVALRCGGYNNVNLKAASEYKITVVHVPSYSPFAVSEFTVGLLLSLNRKIHRAYVRVREDDFNIVGLLGCDIHGKTVGVIGTGKIGSNVAKCFKMGFGCDVLAYDINPDKKLENYGVQFVEQNEVLKKADFLCLHCPLTPSTTHIVNSDSLALMKKGVTIVNTSRGGLIDTKALVDAIDSGQVGGCAIDVYEGERNLFYKDLSNEVIKDSTFQRLVNFPNVLVTSHQAFFTTEALCSIAHTTLKSASDFYTNSLDESVIANK.

Residues 154 to 155 (KI), 233 to 235 (TSR), and Asp-259 contribute to the NAD(+) site. Residue Arg-235 is part of the active site. Residue Glu-264 is part of the active site. The active-site Proton donor is the His-296. 296-299 (HQAF) contributes to the NAD(+) binding site.

Belongs to the D-isomer specific 2-hydroxyacid dehydrogenase family.

Its subcellular location is the cytoplasm. The protein resides in the nucleus. This Schizosaccharomyces pombe (strain 972 / ATCC 24843) (Fission yeast) protein is 2-hydroxyacid dehydrogenase homolog 2.